A 155-amino-acid chain; its full sequence is Glutaredoxin-related protein 5, mitochondrial (155 aa).

Residues 1 to 14 (MNSVFRSTARCLRS) constitute a mitochondrion transit peptide. Residues 42–145 (QKNLEEMVKK…EELQKLGIRS (104 aa)) form the Glutaredoxin domain. Residue lysine 59 coordinates glutathione. [2Fe-2S] cluster is bound at residue cysteine 67. Glutathione is bound by residues 97–101 (RQGIK), isoleucine 109, and 122–123 (CD).

Homodimer.

Its subcellular location is the mitochondrion. Monothiol glutaredoxin involved in mitochondrial iron-sulfur (Fe/S) cluster transfer. Receives iron-sulfur clusters from scaffold protein ISCU and mediates their transfer to apoproteins, to the 4Fe/FS cluster biosynthesis machinery, or export from mitochondrion. Required for normal hemoglobin biosynthesis. In Danio rerio (Zebrafish), this protein is Glutaredoxin-related protein 5, mitochondrial (glrx5).